The primary structure comprises 511 residues: Cytochrome P450 monooxyhenase eriC (511 aa).

A helical membrane pass occupies residues 2–22 (VLADFISIPTVSIACLAVLGI). Position 445 (C445) interacts with heme.

Belongs to the cytochrome P450 family. Heme serves as cofactor.

The protein resides in the membrane. It catalyses the reaction erinacol + reduced [NADPH--hemoprotein reductase] + O2 = cyathadiol + oxidized [NADPH--hemoprotein reductase] + H2O + H(+). Its pathway is secondary metabolite biosynthesis. In terms of biological role, cytochrome P450 monooxygenase; part of the gene cluster that mediates the biosynthesis of erinacines, cyathane-xylosides that show unique biological activities, including leishmanicidal activity, stimulating activity for nerve growth-factor synthesis, and agonistic activity toward the kappa opioid receptor. Within the pathway, eriC hydroxylates erinacol at C-15 of the seven-membered ring to yield cyathadiol. The first step of the erinacines biosynthesis pathway is catalyzed by the geranylgeranyl diphosphate (GGPP) synthase eriE via conversion of farnesyl pyrophosphate and isopentyl pyrophosphate into geranylgeranyl pyrophosphate (GGPP). GGPP is then substrate of the diterpene cyclase eriG for the production of cyatha-3,12-diene. The cytochrome P450 monooxygenase eriI then hydroxylates cyatha-3,12-diene at C-14 of the seven-membered ring to produce erinacol, which is further hydroxylated at C-15 by the cytochrome P450 monooxygenase eriC to yield cyathadiol. The cytochrome P450 monooxygenase eriA then catalyzes C-11 hydroxylation in the presence of the short chain dehydrogenase/reductase (SDR) eriH, which leads to the production of cyathatriol. The acetyltransferase eriL converts cyathatriol into 11-O-acetyl-cyathatriol. The SDR eriH catalyzes further oxidation of 11-O-acetyl-cyathatriol into 1-O-acetylcyathin A3. Finally, the glycosyl transferase eriJ tranfers xylose from UDP-xylose onto C-14 of 11-O-acetyl-cyathatriol to form eracine Q. EriJ is also able to convert 11-O-acetyl-cyathatriol to eracine Q2 by using UDP-D-glucose as cosubstrate, but at a lower rate. In Hericium erinaceus (Lion's mane mushroom), this protein is Cytochrome P450 monooxyhenase eriC.